A 305-amino-acid chain; its full sequence is Acetyl-coenzyme A carboxylase carboxyl transferase subunit beta (305 aa).

One can recognise a CoA carboxyltransferase N-terminal domain in the interval Leu-27–Arg-296. The Zn(2+) site is built by Cys-31, Cys-34, Cys-50, and Cys-53. The C4-type zinc-finger motif lies at Cys-31–Cys-53.

Belongs to the AccD/PCCB family. In terms of assembly, acetyl-CoA carboxylase is a heterohexamer composed of biotin carboxyl carrier protein (AccB), biotin carboxylase (AccC) and two subunits each of ACCase subunit alpha (AccA) and ACCase subunit beta (AccD). Requires Zn(2+) as cofactor.

The protein localises to the cytoplasm. It catalyses the reaction N(6)-carboxybiotinyl-L-lysyl-[protein] + acetyl-CoA = N(6)-biotinyl-L-lysyl-[protein] + malonyl-CoA. The protein operates within lipid metabolism; malonyl-CoA biosynthesis; malonyl-CoA from acetyl-CoA: step 1/1. Functionally, component of the acetyl coenzyme A carboxylase (ACC) complex. Biotin carboxylase (BC) catalyzes the carboxylation of biotin on its carrier protein (BCCP) and then the CO(2) group is transferred by the transcarboxylase to acetyl-CoA to form malonyl-CoA. This Chloroflexus aggregans (strain MD-66 / DSM 9485) protein is Acetyl-coenzyme A carboxylase carboxyl transferase subunit beta.